Consider the following 251-residue polypeptide: MAGHSKWANIKHKKARSDEKRGKEFTKIAKEITIAVRSGGSGDPEANSKLKLAIQKAKAINMPNENINRAVKKGTGEIDSETIEEIIYEGYAPGGIAVMLEIATDNRNRTASEIRHLFSKNNGNLGESGCVAWMFKRVGLISIKKDKLNMEEEEFMLKVLDAGAEDVREEDEEYEVLTLPESFMLVKEAMEEEKLLIEEADIVMLPENTVDITDVDMAGKIIKLIELLEDHDDVQNVYTNMSIPDEIIAAL.

The disordered stretch occupies residues 1–23 (MAGHSKWANIKHKKARSDEKRGK).

It belongs to the TACO1 family.

The protein resides in the cytoplasm. The protein is Probable transcriptional regulatory protein Swol_1435 of Syntrophomonas wolfei subsp. wolfei (strain DSM 2245B / Goettingen).